The following is a 632-amino-acid chain: Chaperone protein HtpG (632 aa).

The tract at residues 1–339 (MAHETMSFQA…SADLPLNVSR (339 aa)) is a; substrate-binding. The segment at 340 to 559 (EILQESRDVK…DNDMSGYLQR (220 aa)) is b. The interval 560–632 (MLKAAGQNAP…TNALLLSRAA (73 aa)) is c.

It belongs to the heat shock protein 90 family. In terms of assembly, homodimer.

It localises to the cytoplasm. Molecular chaperone. Has ATPase activity. The chain is Chaperone protein HtpG from Burkholderia ambifaria (strain ATCC BAA-244 / DSM 16087 / CCUG 44356 / LMG 19182 / AMMD) (Burkholderia cepacia (strain AMMD)).